A 197-amino-acid chain; its full sequence is Transposon Tn10 TetC protein (197 aa).

The HTH tetR-type domain occupies K12 to I72. A DNA-binding region (H-T-H motif) is located at residues S35 to F54.

This Escherichia coli protein is Transposon Tn10 TetC protein (tetC).